Consider the following 1201-residue polypeptide: Period circadian protein homolog 3 (1201 aa).

The interval 1 to 50 is disordered; it reads MPRGEAPGPGRRGAKDEALGEESGERWSPEFHLQRKLADSSHSEQQDRNR. Over residues 13–50 the composition is skewed to basic and acidic residues; that stretch reads GAKDEALGEESGERWSPEFHLQRKLADSSHSEQQDRNR. Positions 55 to 64 match the Nuclear export signal 1 motif; that stretch reads LIMVVQEMKK. PAS domains follow at residues 121 to 188 and 262 to 328; these read IASE…RAQL and YEAP…KVLK. The 44-residue stretch at 337-380 folds into the PAC domain; sequence HSPIRFCTQNGDYIILDSSWSSFVNPWSRKISFIIGRHKVRTSP. Residues 403–412 carry the Nuclear export signal 3 motif; that stretch reads LQEQIYKLLL. The interval 555-760 is CSNK1E binding domain; the sequence is LKRKCISCTN…SSSNTGSGPR (206 aa). Disordered regions lie at residues 717-788 and 881-923; these read YSYF…FPPA and PSMS…RSSS. Residues 721-731 are compositionally biased toward polar residues; that stretch reads QGDSTSKQTRS. Residues 729-745 carry the Nuclear localization signal motif; sequence TRSAGCRKGKHKRKKLP. The span at 733–743 shows a compositional bias: basic residues; that stretch reads GCRKGKHKRKK. 2 stretches are compositionally biased toward low complexity: residues 767 to 783 and 881 to 890; these read AQPC…TSSP and PSMSSAMSPT. Over residues 900–911 the composition is skewed to basic and acidic residues; that stretch reads QRREEEKWEAQS. Ser919 is subject to Phosphoserine. Positions 925 to 932 match the Nuclear export signal 2 motif; that stretch reads LQLNLLQE. The interval 952–1067 is disordered; sequence TEYCVTGNNG…GSAASGSSDS (116 aa). Polar residues-rich tracts occupy residues 957 to 976, 983 to 994, 1001 to 1012, and 1035 to 1050; these read TGNN…STGS, SHPTASALSTGS, and TPSH…GSPP. 5 tandem repeats follow at residues 965–982, 983–1000, 1001–1018, 1019–1036, and 1037–1054. The interval 965–1054 is 5 X 18 AA tandem repeats of S-[HP]-[AP]-T-[AT]-[GST]-[ATV]-L-S-[MT]-G-[LS]-P-P-[MRS]-[EKR]-[NST]-P; the sequence is SPATTGALST…STGSPPSESP (90 aa). Position 994 is a phosphoserine (Ser994). The residue at position 1053 (Ser1053) is a Phosphoserine. Over residues 1053 to 1067 the composition is skewed to low complexity; sequence SPSRTGSAASGSSDS. The segment at 1123–1201 is CRY binding domain; it reads ERVKEVVLKE…CGQVLVEDSC (79 aa).

In terms of assembly, homodimer. Component of the circadian core oscillator, which includes the CRY proteins, CLOCK or NPAS2, BMAL1 or BMAL2, CSNK1D and/or CSNK1E, TIMELESS and the PER proteins. Interacts directly with PER1, PER2, CRY1, CRY2, and TIMELESS; interaction with CRY1 and CRY2 is weak and not rhythmic. Interacts with FBXW11 and BTRC. Phosphorylation by CSNK1E is weak and appears to require association with PER1 and translocation to the nucleus. Post-translationally, ubiquitinated.

It localises to the cytoplasm. It is found in the nucleus. Its function is as follows. Originally described as a core component of the circadian clock. The circadian clock, an internal time-keeping system, regulates various physiological processes through the generation of approximately 24 hour circadian rhythms in gene expression, which are translated into rhythms in metabolism and behavior. It is derived from the Latin roots 'circa' (about) and 'diem' (day) and acts as an important regulator of a wide array of physiological functions including metabolism, sleep, body temperature, blood pressure, endocrine, immune, cardiovascular, and renal function. Consists of two major components: the central clock, residing in the suprachiasmatic nucleus (SCN) of the brain, and the peripheral clocks that are present in nearly every tissue and organ system. Both the central and peripheral clocks can be reset by environmental cues, also known as Zeitgebers (German for 'timegivers'). The predominant Zeitgeber for the central clock is light, which is sensed by retina and signals directly to the SCN. The central clock entrains the peripheral clocks through neuronal and hormonal signals, body temperature and feeding-related cues, aligning all clocks with the external light/dark cycle. Circadian rhythms allow an organism to achieve temporal homeostasis with its environment at the molecular level by regulating gene expression to create a peak of protein expression once every 24 hours to control when a particular physiological process is most active with respect to the solar day. Transcription and translation of core clock components (CLOCK, NPAS2, BMAL1, BMAL2, PER1, PER2, PER3, CRY1 and CRY2) plays a critical role in rhythm generation, whereas delays imposed by post-translational modifications (PTMs) are important for determining the period (tau) of the rhythms (tau refers to the period of a rhythm and is the length, in time, of one complete cycle). A diurnal rhythm is synchronized with the day/night cycle, while the ultradian and infradian rhythms have a period shorter and longer than 24 hours, respectively. Disruptions in the circadian rhythms contribute to the pathology of cardiovascular diseases, cancer, metabolic syndromes and aging. A transcription/translation feedback loop (TTFL) forms the core of the molecular circadian clock mechanism. Transcription factors, CLOCK or NPAS2 and BMAL1 or BMAL2, form the positive limb of the feedback loop, act in the form of a heterodimer and activate the transcription of core clock genes and clock-controlled genes (involved in key metabolic processes), harboring E-box elements (5'-CACGTG-3') within their promoters. The core clock genes: PER1/2/3 and CRY1/2 which are transcriptional repressors form the negative limb of the feedback loop and interact with the CLOCK|NPAS2-BMAL1|BMAL2 heterodimer inhibiting its activity and thereby negatively regulating their own expression. This heterodimer also activates nuclear receptors NR1D1, NR1D2, RORA, RORB and RORG, which form a second feedback loop and which activate and repress BMAL1 transcription, respectively. Has a redundant role with the other PER proteins PER1 and PER2 and is not essential for the circadian rhythms maintenance. In contrast, plays an important role in sleep-wake timing and sleep homeostasis probably through the transcriptional regulation of sleep homeostasis-related genes, without influencing circadian parameters. Can bind heme. The polypeptide is Period circadian protein homolog 3 (PER3) (Homo sapiens (Human)).